A 301-amino-acid chain; its full sequence is Ubiquitin thioesterase OTU1 (301 aa).

Positions 4–80 (KVTGAGINQV…TIESSDSNES (77 aa)) are UBX-like. Residues 109 to 229 (LSVHPVLDDN…GIHYDSLTMN (121 aa)) enclose the OTU domain. The cys-loop stretch occupies residues 114 to 120 (VLDDNSC). Asp117 is a catalytic residue. Residue Cys120 is the Nucleophile of the active site. Lys160 participates in a covalent cross-link: Glycyl lysine isopeptide (Lys-Gly) (interchain with G-Cter in ubiquitin). Residues 169 to 179 (ILKMESWGGAI) form a variable-loop region. A his-loop region spans residues 218 to 222 (FNGIH). Substrate is bound at residue Ile221. His222 is a catalytic residue. The tract at residues 243–248 (DDVLTA) is S2 site. The segment at 270–294 (IKCNTCQMTFVGEREVARHAESTGH) adopts a C2H2-type zinc-finger fold. Residue His294 is part of the active site.

Forms a complex composed of CDC48, NPL4, UFD1, DOA1, SHP1 and deubiquitinase OTU1; within the complex interacts with CDC48 and DOA1/UFD3.

The protein resides in the cytoplasm. Its subcellular location is the nucleus. It catalyses the reaction Thiol-dependent hydrolysis of ester, thioester, amide, peptide and isopeptide bonds formed by the C-terminal Gly of ubiquitin (a 76-residue protein attached to proteins as an intracellular targeting signal).. In terms of biological role, hydrolase that can remove conjugated ubiquitin from proteins and may therefore play an important regulatory role at the level of protein turnover by preventing degradation. Participates in the regulation of the ubiquitin conjugation pathway involving CDC48 by hindering multiubiquitination of substrates at the CDC48 chaperone. May be indirectly involved in PIS1 gene expression. The protein is Ubiquitin thioesterase OTU1 (OTU1) of Saccharomyces cerevisiae (strain ATCC 204508 / S288c) (Baker's yeast).